A 343-amino-acid chain; its full sequence is Phosphate acyltransferase (343 aa).

Belongs to the PlsX family. In terms of assembly, homodimer. Probably interacts with PlsY.

Its subcellular location is the cytoplasm. The catalysed reaction is a fatty acyl-[ACP] + phosphate = an acyl phosphate + holo-[ACP]. Its pathway is lipid metabolism; phospholipid metabolism. In terms of biological role, catalyzes the reversible formation of acyl-phosphate (acyl-PO(4)) from acyl-[acyl-carrier-protein] (acyl-ACP). This enzyme utilizes acyl-ACP as fatty acyl donor, but not acyl-CoA. The chain is Phosphate acyltransferase from Coxiella burnetii (strain RSA 331 / Henzerling II).